The chain runs to 311 residues: MEFSHVPVLLNETIEHLNLKAGGVYVDATLGGGGHSEEILKRADCRVVGLDQDEDALNHAAKRLAPFGDRFIPVKSNFRNIRKVVYRLGLDAVDGVLMDLGVSSFQLDNPLKGFSFQHDGPLDMRMDPQNPKTAADVVNTYPEKELIRIFYEYGEERYAPQIARAIVKRREKKPFTSTLELAEEIIRAVPAKARREKHPAKRVFQAIRIEVNDELSSLEEGLVGAVEVLKPGGRIVVITFHSLEDRLVKNFFRREENPCICPKDFPMCVCGKKPRLKVITKKPLVPSEEEIEKNRRAHSAKLRAAEKLSFA.

Residues 33 to 35, Asp-51, Phe-78, Asp-99, and Gln-106 contribute to the S-adenosyl-L-methionine site; that span reads GGH. The interval 289 to 311 is disordered; the sequence is EEIEKNRRAHSAKLRAAEKLSFA.

Belongs to the methyltransferase superfamily. RsmH family.

The protein localises to the cytoplasm. It catalyses the reaction cytidine(1402) in 16S rRNA + S-adenosyl-L-methionine = N(4)-methylcytidine(1402) in 16S rRNA + S-adenosyl-L-homocysteine + H(+). Functionally, specifically methylates the N4 position of cytidine in position 1402 (C1402) of 16S rRNA. In Carboxydothermus hydrogenoformans (strain ATCC BAA-161 / DSM 6008 / Z-2901), this protein is Ribosomal RNA small subunit methyltransferase H.